The primary structure comprises 105 residues: Replication restart protein PriB (105 aa).

Residues 1–102 (MTANRLVLTG…LHAEQIELID (102 aa)) form the SSB domain.

Belongs to the PriB family. As to quaternary structure, homodimer. Interacts with PriA and DnaT. Component of the replication restart primosome. Primosome assembly occurs via a 'hand-off' mechanism. PriA binds to replication forks, subsequently PriB then DnaT bind; DnaT then displaces ssDNA to generate the helicase loading substrate.

Functionally, involved in the restart of stalled replication forks, which reloads the replicative helicase on sites other than the origin of replication; the PriA-PriB pathway is the major replication restart pathway. During primosome assembly it facilitates complex formation between PriA and DnaT on DNA; stabilizes PriA on DNA. Stimulates the DNA unwinding activity of PriA helicase. The polypeptide is Replication restart protein PriB (Proteus mirabilis (strain HI4320)).